A 209-amino-acid polypeptide reads, in one-letter code: Zinc finger SWIM domain-containing protein sws1 (209 aa).

Residues 1 to 30 show a composition bias toward polar residues; it reads MQQGHFTSNSYHSKTLNSSSLPVSSKFSHT. The segment at 1–33 is disordered; that stretch reads MQQGHFTSNSYHSKTLNSSSLPVSSKFSHTNDP. An SWIM-type zinc finger spans residues 143 to 203; sequence TTIDLKYWYC…HILAASILRA (61 aa).

Interacts with rdl1, rlp1 and srs2.

Its subcellular location is the cytoplasm. The protein resides in the nucleus. It is found in the nucleoplasm. Functionally, involved in early stages of the homologous recombination repair (HRR) pathway of double-stranded DNA breaks arising during DNA replication or induced by DNA-damaging agents. The chain is Zinc finger SWIM domain-containing protein sws1 (sws1) from Schizosaccharomyces pombe (strain 972 / ATCC 24843) (Fission yeast).